The following is a 169-amino-acid chain: Peptide deformylase 1 (169 aa).

Residues cysteine 92 and histidine 134 each coordinate Fe cation. Residue glutamate 135 is part of the active site. Histidine 138 contacts Fe cation.

It belongs to the polypeptide deformylase family. It depends on Fe(2+) as a cofactor.

It carries out the reaction N-terminal N-formyl-L-methionyl-[peptide] + H2O = N-terminal L-methionyl-[peptide] + formate. Removes the formyl group from the N-terminal Met of newly synthesized proteins. Requires at least a dipeptide for an efficient rate of reaction. N-terminal L-methionine is a prerequisite for activity but the enzyme has broad specificity at other positions. This Ralstonia nicotianae (strain ATCC BAA-1114 / GMI1000) (Ralstonia solanacearum) protein is Peptide deformylase 1.